Here is a 157-residue protein sequence, read N- to C-terminus: Crossover junction endodeoxyribonuclease RuvC (157 aa).

Active-site residues include Asp-7, Glu-67, and Asp-139. Residues Asp-7, Glu-67, and Asp-139 each contribute to the Mg(2+) site.

It belongs to the RuvC family. In terms of assembly, homodimer which binds Holliday junction (HJ) DNA. The HJ becomes 2-fold symmetrical on binding to RuvC with unstacked arms; it has a different conformation from HJ DNA in complex with RuvA. In the full resolvosome a probable DNA-RuvA(4)-RuvB(12)-RuvC(2) complex forms which resolves the HJ. It depends on Mg(2+) as a cofactor.

It localises to the cytoplasm. It catalyses the reaction Endonucleolytic cleavage at a junction such as a reciprocal single-stranded crossover between two homologous DNA duplexes (Holliday junction).. Functionally, the RuvA-RuvB-RuvC complex processes Holliday junction (HJ) DNA during genetic recombination and DNA repair. Endonuclease that resolves HJ intermediates. Cleaves cruciform DNA by making single-stranded nicks across the HJ at symmetrical positions within the homologous arms, yielding a 5'-phosphate and a 3'-hydroxyl group; requires a central core of homology in the junction. The consensus cleavage sequence is 5'-(A/T)TT(C/G)-3'. Cleavage occurs on the 3'-side of the TT dinucleotide at the point of strand exchange. HJ branch migration catalyzed by RuvA-RuvB allows RuvC to scan DNA until it finds its consensus sequence, where it cleaves and resolves the cruciform DNA. This is Crossover junction endodeoxyribonuclease RuvC from Prochlorococcus marinus (strain MIT 9312).